The sequence spans 404 residues: Imidazolonepropionase (404 aa).

Residues histidine 70 and histidine 72 each coordinate Fe(3+). Zn(2+) contacts are provided by histidine 70 and histidine 72. 3 residues coordinate 4-imidazolone-5-propanoate: arginine 79, tyrosine 142, and histidine 174. Tyrosine 142 contacts N-formimidoyl-L-glutamate. Residue histidine 234 participates in Fe(3+) binding. Histidine 234 is a Zn(2+) binding site. Position 237 (glutamate 237) interacts with 4-imidazolone-5-propanoate. A Fe(3+)-binding site is contributed by aspartate 308. Aspartate 308 contacts Zn(2+).

The protein belongs to the metallo-dependent hydrolases superfamily. HutI family. It depends on Zn(2+) as a cofactor. Requires Fe(3+) as cofactor.

It is found in the cytoplasm. The catalysed reaction is 4-imidazolone-5-propanoate + H2O = N-formimidoyl-L-glutamate. Its pathway is amino-acid degradation; L-histidine degradation into L-glutamate; N-formimidoyl-L-glutamate from L-histidine: step 3/3. Catalyzes the hydrolytic cleavage of the carbon-nitrogen bond in imidazolone-5-propanoate to yield N-formimidoyl-L-glutamate. It is the third step in the universal histidine degradation pathway. This is Imidazolonepropionase from Thermoplasma volcanium (strain ATCC 51530 / DSM 4299 / JCM 9571 / NBRC 15438 / GSS1).